Reading from the N-terminus, the 249-residue chain is tRNA (guanine-N(1)-)-methyltransferase (249 aa).

S-adenosyl-L-methionine is bound by residues glycine 113 and 133 to 138 (IGDFVV).

It belongs to the RNA methyltransferase TrmD family. As to quaternary structure, homodimer.

Its subcellular location is the cytoplasm. It carries out the reaction guanosine(37) in tRNA + S-adenosyl-L-methionine = N(1)-methylguanosine(37) in tRNA + S-adenosyl-L-homocysteine + H(+). Specifically methylates guanosine-37 in various tRNAs. The protein is tRNA (guanine-N(1)-)-methyltransferase of Neisseria meningitidis serogroup C / serotype 2a (strain ATCC 700532 / DSM 15464 / FAM18).